We begin with the raw amino-acid sequence, 180 residues long: MFEATTILGYRGEMGGKKFAFIGGDGQVTLGNCVVKANATKIRSLYHNQVLSGFAGSTADAFSLFDMFERILESKKGDLFKSVVDFSKEWRKDKYLRRLEAMMIVLNLDHIFILSGTGDVLEAEDNKIAAIGSGGNYALSAARALDHFAHLEPKKLVEESLKIAGDLCIYTNTNIKILEL.

Thr5 is a catalytic residue. Na(+)-binding residues include Gly165, Cys168, and Thr171.

The protein belongs to the peptidase T1B family. HslV subfamily. As to quaternary structure, a double ring-shaped homohexamer of HslV is capped on each side by a ring-shaped HslU homohexamer. The assembly of the HslU/HslV complex is dependent on binding of ATP.

It is found in the cytoplasm. The catalysed reaction is ATP-dependent cleavage of peptide bonds with broad specificity.. Allosterically activated by HslU binding. Protease subunit of a proteasome-like degradation complex believed to be a general protein degrading machinery. This Helicobacter pylori (strain P12) protein is ATP-dependent protease subunit HslV.